The following is an 84-amino-acid chain: Small ribosomal subunit protein bS20 (84 aa).

The segment at 1–32 (MPRHESAKKRMRQNEKRQKRNKSQKSRVRTKI) is disordered.

Belongs to the bacterial ribosomal protein bS20 family.

Its function is as follows. Binds directly to 16S ribosomal RNA. This Salinibacter ruber (strain DSM 13855 / M31) protein is Small ribosomal subunit protein bS20.